A 341-amino-acid chain; its full sequence is Probable galacturonosyltransferase-like 2 (341 aa).

The Cytoplasmic segment spans residues 1 to 4; sequence MHSK. The chain crosses the membrane as a helical; Signal-anchor for type II membrane protein span at residues 5–22; the sequence is FILYLSILAVFTVSFAGG. Residues 23–341 are Lumenal-facing; the sequence is ERFKEAPKFF…LESRFDLIES (319 aa). Residue Asn-190 is glycosylated (N-linked (GlcNAc...) asparagine).

Belongs to the glycosyltransferase 8 family.

It is found in the golgi apparatus membrane. The protein operates within glycan metabolism; pectin biosynthesis. Functionally, may be involved in pectin and/or xylans biosynthesis in cell walls. In Arabidopsis thaliana (Mouse-ear cress), this protein is Probable galacturonosyltransferase-like 2 (GATL2).